The sequence spans 208 residues: FMN-dependent NADH:quinone oxidoreductase (208 aa).

FMN is bound by residues 17-19, 99-102, and 143-146; these read SNS, MWNL, and SRGG.

The protein belongs to the azoreductase type 1 family. As to quaternary structure, homodimer. FMN serves as cofactor.

It carries out the reaction 2 a quinone + NADH + H(+) = 2 a 1,4-benzosemiquinone + NAD(+). The enzyme catalyses N,N-dimethyl-1,4-phenylenediamine + anthranilate + 2 NAD(+) = 2-(4-dimethylaminophenyl)diazenylbenzoate + 2 NADH + 2 H(+). Quinone reductase that provides resistance to thiol-specific stress caused by electrophilic quinones. Functionally, also exhibits azoreductase activity. Catalyzes the reductive cleavage of the azo bond in aromatic azo compounds to the corresponding amines. The polypeptide is FMN-dependent NADH:quinone oxidoreductase (Staphylococcus haemolyticus (strain JCSC1435)).